Consider the following 272-residue polypeptide: Shikimate dehydrogenase (NADP(+)) (272 aa).

Shikimate contacts are provided by residues 14–16 (SKS) and Thr61. Lys65 (proton acceptor) is an active-site residue. Glu77 serves as a coordination point for NADP(+). Shikimate-binding residues include Asn86 and Asp102. Residues 126-130 (GAGGA), 149-154 (NRTVSR), and Met213 contribute to the NADP(+) site. Residue Tyr215 coordinates shikimate. NADP(+) is bound at residue Gly237.

Belongs to the shikimate dehydrogenase family. Homodimer.

It carries out the reaction shikimate + NADP(+) = 3-dehydroshikimate + NADPH + H(+). The protein operates within metabolic intermediate biosynthesis; chorismate biosynthesis; chorismate from D-erythrose 4-phosphate and phosphoenolpyruvate: step 4/7. Involved in the biosynthesis of the chorismate, which leads to the biosynthesis of aromatic amino acids. Catalyzes the reversible NADPH linked reduction of 3-dehydroshikimate (DHSA) to yield shikimate (SA). This is Shikimate dehydrogenase (NADP(+)) from Shigella boydii serotype 18 (strain CDC 3083-94 / BS512).